A 309-amino-acid polypeptide reads, in one-letter code: Taste receptor type 2 member 46 (309 aa).

Met1 is a topological domain (extracellular). The helical transmembrane segment at 2–22 (ITFLPIIFSILIVVTFVIGNF) threads the bilayer. Topologically, residues 23 to 46 (ANGFIALANSIEWFKRQKISFADQ) are cytoplasmic. The chain crosses the membrane as a helical span at residues 47 to 67 (ILTALAVSRVGLLWVLLLNWY). Residues 68–86 (ATELNPAFYSIEVRITAYN) lie on the Extracellular side of the membrane. A helical membrane pass occupies residues 87–107 (LWAVINHFSNWLATSLSIFYL). Topologically, residues 108 to 126 (LKIANFSNLIFLRLKRRVK) are cytoplasmic. Residues 127-147 (SVVLVILLGPLLFLVCHLFVI) traverse the membrane as a helical segment. The Extracellular segment spans residues 148-178 (NMNQIIWTKEYEGNMTWKIKLRSAMYLSNIT). Asn161 and Asn176 each carry an N-linked (GlcNAc...) asparagine glycan. A helical membrane pass occupies residues 179 to 199 (VTILANLVPFTLTLISFLLLI). The Cytoplasmic segment spans residues 200 to 229 (CSLCKHLKKMQLHGKGSQDPSMKVHIKALQ). The chain crosses the membrane as a helical span at residues 230-250 (TVTSFLLLCAIYFLSIIMSVW). Residues 251 to 259 (SFESLENKP) are Extracellular-facing. The helical transmembrane segment at 260–280 (VFMFCEAITFSYPSTHPFILI) threads the bilayer. Over 281–309 (WGNKKLKQTFLSVLWHVRYWVKGEEPSSP) the chain is Cytoplasmic.

The protein belongs to the G-protein coupled receptor T2R family.

It is found in the membrane. The protein resides in the cell projection. Its subcellular location is the cilium membrane. In terms of biological role, receptor that may play a role in the perception of bitterness and is gustducin-linked. May play a role in sensing the chemical composition of the gastrointestinal content. The activity of this receptor may stimulate alpha gustducin, mediate PLC-beta-2 activation and lead to the gating of TRPM5. In airway epithelial cells, binding of bitter compounds increases the intracellular calcium ion concentration and stimulates ciliary beat frequency. The protein is Taste receptor type 2 member 46 (TAS2R46) of Pan paniscus (Pygmy chimpanzee).